Consider the following 373-residue polypeptide: Chorismate synthase (373 aa).

Arg46 lines the NADP(+) pocket. Residues 123–125 (RSS), 251–252 (NA), Gly295, 310–314 (KPTPS), and Arg337 each bind FMN.

It belongs to the chorismate synthase family. The cofactor is FMNH2.

The enzyme catalyses 5-O-(1-carboxyvinyl)-3-phosphoshikimate = chorismate + phosphate. It participates in metabolic intermediate biosynthesis; chorismate biosynthesis; chorismate from D-erythrose 4-phosphate and phosphoenolpyruvate: step 7/7. Functionally, catalyzes the anti-1,4-elimination of the C-3 phosphate and the C-6 proR hydrogen from 5-enolpyruvylshikimate-3-phosphate (EPSP) to yield chorismate, which is the branch point compound that serves as the starting substrate for the three terminal pathways of aromatic amino acid biosynthesis. This reaction introduces a second double bond into the aromatic ring system. The protein is Chorismate synthase of Methanococcus maripaludis (strain C7 / ATCC BAA-1331).